We begin with the raw amino-acid sequence, 221 residues long: Ras-related protein Rab-27A (221 aa).

Position 2 is an N-acetylserine (Ser2). Phosphoserine is present on Ser2. A GTP-binding site is contributed by 16–24 (GDSGVGKTS). The short motif at 38–46 (FITTVGIDF) is the Effector region element. GTP contacts are provided by residues 74-78 (DTAGQ), 133-136 (NKSD), and 163-165 (SAA). Residues Cys123 and Cys188 are joined by a disulfide bond. The tract at residues 202 to 221 (NGHTSADPLNEEKEKGSCGC) is disordered. Residues 211–221 (NEEKEKGSCGC) show a composition bias toward basic and acidic residues. S-geranylgeranyl cysteine attachment occurs at residues Cys219 and Cys221. Cys221 carries the cysteine methyl ester modification.

The protein belongs to the small GTPase superfamily. Rab family. As to quaternary structure, binds SYTL1, SLAC2B, MYRIP, SYTL3, SYTL4 and SYTL5. Interacts with RPH3A and RPH3A. Binds MLPH and SYTL2. Interacts with UNC13D. Does not interact with the BLOC-3 complex (heterodimer of HPS1 and HPS4). Interacts (GDP-bound form preferentially) with DENND10.

Its subcellular location is the membrane. The protein localises to the melanosome. It is found in the late endosome. The protein resides in the lysosome. The enzyme catalyses GTP + H2O = GDP + phosphate + H(+). With respect to regulation, regulated by guanine nucleotide exchange factors (GEFs) which promote the exchange of bound GDP for free GTP, GTPase activating proteins (GAPs) which increase the GTP hydrolysis activity, and GDP dissociation inhibitors which inhibit the dissociation of the nucleotide from the GTPase. Activated by GEFs such as DENND10. In terms of biological role, small GTPase which cycles between active GTP-bound and inactive GDP-bound states. In its active state, binds to a variety of effector proteins to regulate homeostasis of late endocytic pathway, including endosomal positioning, maturation and secretion. Plays a role in cytotoxic granule exocytosis in lymphocytes. Required for both granule maturation and granule docking and priming at the immunologic synapse. The chain is Ras-related protein Rab-27A (RAB27A) from Sus scrofa (Pig).